Here is a 175-residue protein sequence, read N- to C-terminus: MDSEFFQPVYPRHYGECLSPTSTPSFFSTHMCTILVAIVVLIIIIIVLIYLFSSRKKKAAAPAIEEEDIQFINPYQDQQWAGATPQPGTSKPAGATTGNVGKPITDRPATDRPVTNNPVTDRLIMATGGPAAASAPSAELYTTATTQNTASQTMPAVEALRQRSTYTHKDLENSL.

The chain crosses the membrane as a helical span at residues 32-52 (CTILVAIVVLIIIIIVLIYLF). Residues 79-89 (QWAGATPQPGT) are compositionally biased toward polar residues. The disordered stretch occupies residues 79-121 (QWAGATPQPGTSKPAGATTGNVGKPITDRPATDRPVTNNPVTD). The interaction with host DYNLL1 stretch occupies residues 141 to 153 (YTTATTQNTASQT).

This sequence belongs to the asfivirus envelope protein p54 family. Interacts with the host light chain cytoplasmic dynein DYNLL1; this interaction is critical for intracellular microtubule-dependent virus transport toward viral factories.

The protein resides in the virion membrane. It localises to the host cytoplasm. Its subcellular location is the host cytoskeleton. The protein localises to the host endoplasmic reticulum membrane. Functionally, inner envelope protein involved, through its interaction with host dynein, in the intracellular microtubule-dependent transport of viral capsid toward viral factories. Seems to induce caspase-3 activation and apoptosis. Plays a role in virion morphogenesis by recruiting and transforming the host ER membranes into the precursors of the viral envelope. Involved in virus attachment to the host cell. In African swine fever virus (isolate Pig/Kenya/KEN-50/1950) (ASFV), this protein is Inner membrane protein p54.